We begin with the raw amino-acid sequence, 102 residues long: Small ribosomal subunit protein uS10 (102 aa).

It belongs to the universal ribosomal protein uS10 family. In terms of assembly, part of the 30S ribosomal subunit.

Functionally, involved in the binding of tRNA to the ribosomes. This is Small ribosomal subunit protein uS10 from Ligilactobacillus salivarius (strain UCC118) (Lactobacillus salivarius).